The chain runs to 217 residues: Small ribosomal subunit protein eS6 (217 aa).

Belongs to the eukaryotic ribosomal protein eS6 family.

The sequence is that of Small ribosomal subunit protein eS6 from Hyperthermus butylicus (strain DSM 5456 / JCM 9403 / PLM1-5).